Consider the following 296-residue polypeptide: Nucleotide-binding protein spyM18_0713 (296 aa).

Residue Gly-13 to Thr-20 participates in ATP binding. Residue Asp-63–Ser-66 participates in GTP binding.

The protein belongs to the RapZ-like family.

Its function is as follows. Displays ATPase and GTPase activities. This Streptococcus pyogenes serotype M18 (strain MGAS8232) protein is Nucleotide-binding protein spyM18_0713.